We begin with the raw amino-acid sequence, 125 residues long: MFTSSKVAIQVQSVYIESQSSPEEQRYVFAYTITIHNLNKHAIRLLRRYWLITNAQGNTTEVQGEGVVGEQPLIEAGSRYRYTSGAVLETPMGTMEGHYEMIDAQGRLFQIDIPVFRLAIPTLIN.

Residues 1–125 enclose the ApaG domain; sequence MFTSSKVAIQ…FRLAIPTLIN (125 aa).

In Proteus mirabilis (strain HI4320), this protein is Protein ApaG.